Consider the following 177-residue polypeptide: Nucleoside triphosphate/diphosphate phosphatase (177 aa).

Catalysis depends on R23, which acts as the Proton donor. Mg(2+) contacts are provided by N87, D103, D105, D107, D120, and E123.

Belongs to the Ntdp family. Requires Mg(2+) as cofactor.

The catalysed reaction is a ribonucleoside 5'-triphosphate + H2O = a ribonucleoside 5'-diphosphate + phosphate + H(+). The enzyme catalyses a ribonucleoside 5'-diphosphate + H2O = a ribonucleoside 5'-phosphate + phosphate + H(+). In terms of biological role, has nucleoside phosphatase activity towards nucleoside triphosphates and nucleoside diphosphates. The polypeptide is Nucleoside triphosphate/diphosphate phosphatase (Streptococcus thermophilus (strain ATCC BAA-491 / LMD-9)).